We begin with the raw amino-acid sequence, 90 residues long: Large ribosomal subunit protein bL27 (90 aa).

The segment at 1 to 20 is disordered; sequence MAHKKAGGSSRNGRDSAGKR.

This sequence belongs to the bacterial ribosomal protein bL27 family.

The sequence is that of Large ribosomal subunit protein bL27 from Rhodopseudomonas palustris (strain BisB18).